The following is a 358-amino-acid chain: Na(+)/H(+) exchange regulatory cofactor NHE-RF1 (358 aa).

An N-acetylserine modification is found at serine 2. Phosphoserine occurs at positions 2 and 46. Residues 14-94 enclose the PDZ 1 domain; it reads LCCLEKGPNG…AVRLLVVDPE (81 aa). Low complexity predominate over residues 114-132; that stretch reads QEAPGQAEPPAAAEVQGAG. The tract at residues 114-192 is disordered; that stretch reads QEAPGQAEPP…DPDSPAEASG (79 aa). Residues 135–152 are compositionally biased toward basic and acidic residues; the sequence is NEPREADKSHPEQRELRP. In terms of domain architecture, PDZ 2 spans 154–234; the sequence is LCTMKKGPSG…ETKLLVVDRE (81 aa). A phosphoserine mark is found at serine 162, serine 269, serine 280, serine 290, and serine 291. The tract at residues 277-358 is disordered; that stretch reads ALESPRPALV…SKKNELFSNL (82 aa). The span at 288–306 shows a compositional bias: polar residues; sequence SASSDTSEELNSQDSPPKQ. A Phosphothreonine modification is found at threonine 293. Residues serine 294, serine 299, and serine 302 each carry the phosphoserine modification. Residues 307-319 show a composition bias toward low complexity; the sequence is DSTAPSSTSSSDP. Residues 348–358 are compositionally biased toward basic and acidic residues; it reads WSKKNELFSNL.

Homodimer, and heterodimer with NHERF2. Binds the N-termini of EZR, RDX and MSN. Binds the C-termini of PDGFRA, PDGFRB, ADRB2, NOS2 and CFTR. Binds ARHGAP17, EPI64, RACK1, OPRK1, GNAQ, CTNNB1 and PLCB3. Binds PDZK1. Interacts with CLCN3. Binds the C-terminus of PAG1. In resting T-cells, part of a PAG1-NHERF1-MSN complex which is disrupted upon TCR activation. Forms a complex with CFTR and SLC4A7. Forms a complex with SLC4A7 and ATP6V1B1. Interacts with TRPC4 (via the PDZ-binding domain). Directly interacts with HTR4. Interacts (via the PDZ 1 domain) with PODXL (via the C-terminal PDZ-binding motif DTHL); interaction is not detected in glomerular epithelium cells. Interacts (via the PDZ 1 domain) with PODXL (via the C-terminal PDZ-binding motif DTHL); the interaction take place early in the secretory pathway and is necessary for its apical membrane sorting. Interacts with SLC26A3. Interacts with MCC. Interacts with SLC34A1. Interacts (via the PDZ domains) with SLC26A6 isoform 4 and isoform 5. Interacts (via PDZ domains) with ACE2 (via PDZ-binding motif); the interaction may enhance ACE2 membrane residence. Phosphorylated on serine residues. As to expression, detected in liver, kidney, pancreas, prostate, spleen, small intestine and placenta, in particular in the syncytiotrophoblast.

It localises to the cytoplasm. It is found in the apical cell membrane. The protein resides in the endomembrane system. The protein localises to the cell projection. Its subcellular location is the filopodium. It localises to the ruffle. It is found in the microvillus. Scaffold protein that connects plasma membrane proteins with members of the ezrin/moesin/radixin family and thereby helps to link them to the actin cytoskeleton and to regulate their surface expression. Necessary for recycling of internalized ADRB2. Was first known to play a role in the regulation of the activity and subcellular location of SLC9A3. Necessary for cAMP-mediated phosphorylation and inhibition of SLC9A3. May enhance Wnt signaling. May participate in HTR4 targeting to microvilli. Involved in the regulation of phosphate reabsorption in the renal proximal tubules. Involved in sperm capacitation. May participate in the regulation of the chloride and bicarbonate homeostasis in spermatozoa. This Homo sapiens (Human) protein is Na(+)/H(+) exchange regulatory cofactor NHE-RF1.